A 397-amino-acid polypeptide reads, in one-letter code: Phosphoglycerate kinase (397 aa).

Substrate contacts are provided by residues 21 to 23 (DFN), arginine 37, 60 to 63 (HLGR), arginine 119, and arginine 152. Residues lysine 202, glycine 294, glutamate 325, and 351–354 (GGDS) each bind ATP.

This sequence belongs to the phosphoglycerate kinase family. In terms of assembly, monomer.

It localises to the cytoplasm. It catalyses the reaction (2R)-3-phosphoglycerate + ATP = (2R)-3-phospho-glyceroyl phosphate + ADP. It participates in carbohydrate degradation; glycolysis; pyruvate from D-glyceraldehyde 3-phosphate: step 2/5. The protein is Phosphoglycerate kinase of Pseudothermotoga lettingae (strain ATCC BAA-301 / DSM 14385 / NBRC 107922 / TMO) (Thermotoga lettingae).